The following is a 263-amino-acid chain: Proteasome subunit alpha type-1 (263 aa).

Position 1 is an N-acetylmethionine (M1). The residue at position 110 (S110) is a Phosphoserine; alternate. An O-linked (GlcNAc) serine; alternate glycan is attached at S110. K115 is covalently cross-linked (Glycyl lysine isopeptide (Lys-Gly) (interchain with G-Cter in ubiquitin)). Phosphoserine is present on S177. A Glycyl lysine isopeptide (Lys-Gly) (interchain with G-Cter in ubiquitin) cross-link involves residue K208. The interval 232–263 (FLDGLEERPQRKAQPSQAAEEPAEKADEPMEH) is disordered. Positions 253 to 263 (PAEKADEPMEH) are enriched in basic and acidic residues.

It belongs to the peptidase T1A family. In terms of assembly, the 26S proteasome consists of a 20S proteasome core and two 19S regulatory subunits. The 20S proteasome core is a barrel-shaped complex made of 28 subunits that are arranged in four stacked rings. The two outer rings are each formed by seven alpha subunits, and the two inner rings are formed by seven beta subunits. The proteolytic activity is exerted by three beta-subunits PSMB5, PSMB6 and PSMB7. Interacts with NOTCH3. Interacts with ZFAND1. C-terminal extension is partially cleaved off by limited proteolysis leading to a conversion of the proteasome from its latent into its active form. Detected in liver (at protein level).

It is found in the cytoplasm. The protein localises to the nucleus. Functionally, component of the 20S core proteasome complex involved in the proteolytic degradation of most intracellular proteins. This complex plays numerous essential roles within the cell by associating with different regulatory particles. Associated with two 19S regulatory particles, forms the 26S proteasome and thus participates in the ATP-dependent degradation of ubiquitinated proteins. The 26S proteasome plays a key role in the maintenance of protein homeostasis by removing misfolded or damaged proteins that could impair cellular functions, and by removing proteins whose functions are no longer required. Associated with the PA200 or PA28, the 20S proteasome mediates ubiquitin-independent protein degradation. This type of proteolysis is required in several pathways including spermatogenesis (20S-PA200 complex) or generation of a subset of MHC class I-presented antigenic peptides (20S-PA28 complex). The chain is Proteasome subunit alpha type-1 (Psma1) from Mus musculus (Mouse).